Reading from the N-terminus, the 385-residue chain is MLIIFLFFNFCYGFNEPLNVVSHLNHDWFLFGDSRSDCNHINNLKIKNYGYLDIHPSLCNNGKISSSAGDSIFKSYHFTRFYNYTGEGDQIIFYEGVNFNPHHRFKCFFNGSNDVWIFNKVRFYRALYSNMALFRYLTFVDILYNFSFSIKANICNSNILSLNNPIFISTNYSKDVYFTLSGCSLYLVPLCLFKSNFSQYYYNMDTGFAYGYSNFVSSDLDCTYISLKPGSYKIFSTGFVLSIPTKALCFNKSKQFVPVQVVDSRWNNLRASDTSLSDACQLPYCYFRNSSGNYVGKYDINHGDNGFTSILSGLLYNVSCISYYGSFLYDNFTSIWPRFSFGNCPTSAYIKLNCFYDPLPIILQGILLFLALLFIVFLLFLVYHG.

A signal peptide spans 1–11 (MLIIFLFFNFC). The tract at residues 1–121 (MLIIFLFFNF…SNDVWIFNKV (121 aa)) is esterase domain 1. Residues 12–361 (YGFNEPLNVV…LNCFYDPLPI (350 aa)) lie on the Virion surface side of the membrane. Catalysis depends on S34, which acts as the Nucleophile. C38 and C59 are disulfide-bonded. 6 N-linked (GlcNAc...) asparagine; by host glycosylation sites follow: N83, N110, N145, N171, N196, and N251. C107 and C155 are disulfide-bonded. The segment at 122–239 (RFYRALYSNM…GSYKIFSTGF (118 aa)) is receptor binding. Intrachain disulfides connect C183/C249 and C191/C222. Positions 240–352 (VLSIPTKALC…NCPTSAYIKL (113 aa)) are esterase domain 2. C280 and C285 are joined by a disulfide. N289 is a glycosylation site (N-linked (GlcNAc...) asparagine; by host). Active-site charge relay system residues include D299 and H302. A disulfide bridge connects residues C320 and C344. N-linked (GlcNAc...) asparagine; by host glycosylation occurs at N331. Residues 362–382 (ILQGILLFLALLFIVFLLFLV) form a helical membrane-spanning segment. At 383–385 (YHG) the chain is on the intravirion side.

The protein belongs to the influenza type C/coronaviruses hemagglutinin-esterase family. Homodimer; disulfide-linked. Forms a complex with the M protein in the pre-Golgi. Associates then with S-M complex to form a ternary complex S-M-HE. N-glycosylated in the host RER.

It is found in the virion membrane. Its subcellular location is the host cell membrane. The catalysed reaction is N-acetyl-9-O-acetylneuraminate + H2O = N-acetylneuraminate + acetate + H(+). The enzyme catalyses N-acetyl-4-O-acetylneuraminate + H2O = N-acetylneuraminate + acetate + H(+). Its function is as follows. Structural protein that makes short spikes at the surface of the virus. Contains receptor binding and receptor-destroying activities. Mediates de-O-acetylation of N-acetyl-4-O-acetylneuraminic acid, which is probably the receptor determinant recognized by the virus on the surface of erythrocytes and susceptible cells. This receptor-destroying activity is important for virus release as it probably helps preventing self-aggregation and ensures the efficient spread of the progeny virus from cell to cell. May serve as a secondary viral attachment protein for initiating infection, the spike protein being the major one. May become a target for both the humoral and the cellular branches of the immune system. In Human coronavirus HKU1 (isolate N2) (HCoV-HKU1), this protein is Hemagglutinin-esterase.